The primary structure comprises 366 residues: Peptide chain release factor 2 (366 aa).

An N5-methylglutamine modification is found at Gln253.

Belongs to the prokaryotic/mitochondrial release factor family. Post-translationally, methylated by PrmC. Methylation increases the termination efficiency of RF2.

It is found in the cytoplasm. Functionally, peptide chain release factor 2 directs the termination of translation in response to the peptide chain termination codons UGA and UAA. This chain is Peptide chain release factor 2 (prfB), found in Buchnera aphidicola subsp. Baizongia pistaciae (strain Bp).